We begin with the raw amino-acid sequence, 734 residues long: Photosystem I P700 chlorophyll a apoprotein A2 (734 aa).

8 consecutive transmembrane segments (helical) span residues 46 to 69 (IFAS…FHVA), 135 to 158 (LYTG…LHLQ), 175 to 199 (LNHH…HVAI), 273 to 291 (IAHH…GHMY), 330 to 353 (LHFQ…QHMY), 369 to 395 (AALY…IFLI), 417 to 439 (AIIS…LYVH), and 517 to 535 (FLVH…LILV). [4Fe-4S] cluster is bound by residues Cys-559 and Cys-568. The next 2 helical transmembrane spans lie at 575–596 (AFYS…YWHW) and 643–665 (LSVW…MFLI). Chlorophyll a is bound by residues His-654, Met-662, and Tyr-670. Position 671 (Trp-671) interacts with phylloquinone. A helical membrane pass occupies residues 707–727 (LVGLAHFSVGYIFTYAAFLIA).

The protein belongs to the PsaA/PsaB family. The PsaA/B heterodimer binds the P700 chlorophyll special pair and subsequent electron acceptors. PSI consists of a core antenna complex that captures photons, and an electron transfer chain that converts photonic excitation into a charge separation. The eukaryotic PSI reaction center is composed of at least 11 subunits. P700 is a chlorophyll a/chlorophyll a' dimer, A0 is one or more chlorophyll a, A1 is one or both phylloquinones and FX is a shared 4Fe-4S iron-sulfur center. serves as cofactor.

The protein resides in the plastid. It is found in the chloroplast thylakoid membrane. The catalysed reaction is reduced [plastocyanin] + hnu + oxidized [2Fe-2S]-[ferredoxin] = oxidized [plastocyanin] + reduced [2Fe-2S]-[ferredoxin]. Its function is as follows. PsaA and PsaB bind P700, the primary electron donor of photosystem I (PSI), as well as the electron acceptors A0, A1 and FX. PSI is a plastocyanin-ferredoxin oxidoreductase, converting photonic excitation into a charge separation, which transfers an electron from the donor P700 chlorophyll pair to the spectroscopically characterized acceptors A0, A1, FX, FA and FB in turn. Oxidized P700 is reduced on the lumenal side of the thylakoid membrane by plastocyanin. In Huperzia lucidula (Shining clubmoss), this protein is Photosystem I P700 chlorophyll a apoprotein A2.